The sequence spans 232 residues: MKTFVICSGGLDSVSLAHKVAVEKTLAGLISFDYGQRHKKELDFARACAQRLDVRHMIIDIRAVGEGLAGSALTDEIDVPNGHYAEDTMRITVVPNRNAIMLAIAFGVAAAQNADAVATAVHGGDHFIYPDCRPGFIEAFQAMQAQALDGYAKIALYAPYVNLSKANIVSDGVRHRTPFEATWSCYKGGKHHCGRCGTCVERREAFDLAGVTDPTTYEDAAFWREAVARKAG.

Residue 7–17 (CSGGLDSVSLA) coordinates ATP. 4 residues coordinate Zn(2+): C185, C193, C196, and C199.

This sequence belongs to the QueC family. The cofactor is Zn(2+).

The catalysed reaction is 7-carboxy-7-deazaguanine + NH4(+) + ATP = 7-cyano-7-deazaguanine + ADP + phosphate + H2O + H(+). It functions in the pathway purine metabolism; 7-cyano-7-deazaguanine biosynthesis. In terms of biological role, catalyzes the ATP-dependent conversion of 7-carboxy-7-deazaguanine (CDG) to 7-cyano-7-deazaguanine (preQ(0)). This chain is 7-cyano-7-deazaguanine synthase, found in Chelativorans sp. (strain BNC1).